The chain runs to 433 residues: Transcription factor elt-2 (433 aa).

Disordered regions lie at residues 1-47 and 194-235; these read MDNN…ELPR and GQPP…RQGL. The segment covering 27 to 43 has biased composition (polar residues); sequence PTQNMDPPEQNNESQLS. The span at 211–234 shows a compositional bias: low complexity; sequence AKQSSKKSSSSNRGSNGSASRRQG. The GATA-type zinc finger occupies 237–261; it reads CSNCNGTNTTLWRRNAEGDPVCNAC. A disordered region spans residues 275 to 332; it reads SMKKEGALQTRKRKSKSGDSSTPSTSRARERKFERASSSTEKAQRSSNRRAGSAKADR. The span at 310–324 shows a compositional bias: polar residues; that stretch reads ASSSTEKAQRSSNRR.

In terms of assembly, interacts with lag-1. Interacts with pha-4. Interacts with rpt-6. May be ubiquitinated in response to infection by B.pseudomallei. In terms of tissue distribution, expressed in the intestine.

It localises to the nucleus. Its function is as follows. Transcriptional activator that binds to the consensus sequence 5'-[AT]GATA[AG]-3'. Predominantly directs the transcription of intestinal genes such as ges-1, cpr-6, pho-1, ftn-1, vit-2 and lev-11, and itself. Required for gut-specific differentiation, specifically acting with the GATA region-binding transcription factor elt-7 to control normal gene expression and promote normal formation of the intestine. Regulates intestinal gene expression in response to hypoxia to promote longevity. Modulation of longevity may, in part, be the result of regulation of expression of daf-16 isoforms d and f in the intestine. Regulates tissue specific gene expression at basal levels and in response to bacterial infection in the intestine to control innate immunity. Plays a role in the induction of metal-responsive genes, activating gene expression from zinc-activated promoters and iron-dependent promoters and enhancers. May regulate the expression of genes that control sensitivity to oxidative stress, in a mab-3-dependent manner, and osmotic stress, in conjunction with the GATA region-binding transcription factor elt-3. May play a role in sphingolipid signaling by regulating the expression of the sphingosine-1-phosphate degrading enzyme, sphingosine-1-phosphate lyase. May act with the Notch signaling pathway to promote endodermal gene expression. Has a protective role in response to infection by Gram-negative bacteria such as S.enterica, E.coli, P.aeruginosa and B.pseudomallei, Gram-positive bacterium E.faecalis and fungal pathogen C.neoformans. An association with the 26S proteasome regulatory subunit rpt-6, in part, controls gene expression in response to infection by P.aeruginosa. Regulates gene expression during the recovery phase following a bacterial infection. May act with p38-activated transcription factors to control p38 gene induction in response to bacterial infection. Controls lysosome formation in the intestine by controlling lysosomal gene expression. This is Transcription factor elt-2 from Caenorhabditis elegans.